A 457-amino-acid chain; its full sequence is C4-dicarboxylate transport protein (457 aa).

7 helical membrane passes run 20–42 (LYFQ…PAFA), 51–73 (AFIK…TGIA), 88–110 (AMAY…AHVV), 138–158 (LTLV…AFTG), 166–188 (LTGP…LALV), 212–234 (ILMR…KYGV), and 241–263 (AWLV…GLVS).

Belongs to the dicarboxylate/amino acid:cation symporter (DAACS) (TC 2.A.23) family.

Its subcellular location is the cell inner membrane. In terms of biological role, responsible for the transport of dicarboxylates such as succinate, fumarate, and malate from the periplasm across the membrane. This Xanthomonas axonopodis pv. citri (strain 306) protein is C4-dicarboxylate transport protein.